A 498-amino-acid polypeptide reads, in one-letter code: ATP synthase subunit beta, chloroplastic (498 aa).

172–179 is a binding site for ATP; that stretch reads GGAGVGKT.

Belongs to the ATPase alpha/beta chains family. F-type ATPases have 2 components, CF(1) - the catalytic core - and CF(0) - the membrane proton channel. CF(1) has five subunits: alpha(3), beta(3), gamma(1), delta(1), epsilon(1). CF(0) has four main subunits: a(1), b(1), b'(1) and c(9-12).

The protein localises to the plastid. Its subcellular location is the chloroplast thylakoid membrane. It catalyses the reaction ATP + H2O + 4 H(+)(in) = ADP + phosphate + 5 H(+)(out). Functionally, produces ATP from ADP in the presence of a proton gradient across the membrane. The catalytic sites are hosted primarily by the beta subunits. In Triticum aestivum (Wheat), this protein is ATP synthase subunit beta, chloroplastic.